A 742-amino-acid chain; its full sequence is Photosystem I P700 chlorophyll a apoprotein A2 (742 aa).

8 helical membrane-spanning segments follow: residues Leu46 to Ala69, Leu135 to Gln158, Leu175 to Ile199, Ile273 to Tyr291, Leu336 to Gly359, Ser375 to Val401, Ala423 to His445, and Phe525 to Ile543. Cys567 and Cys576 together coordinate [4Fe-4S] cluster. Transmembrane regions (helical) follow at residues Ala583–Trp604 and Leu651–Ile673. Divinyl chlorophyll a-binding residues include His662, Met670, and Tyr678. Position 679 (Trp679) interacts with phylloquinone. The chain crosses the membrane as a helical span at residues Leu715 to Ala735.

This sequence belongs to the PsaA/PsaB family. As to quaternary structure, the PsaA/B heterodimer binds the P700 divinyl chlorophyll special pair and subsequent electron acceptors. PSI consists of a core antenna complex that captures photons, and an electron transfer chain that converts photonic excitation into a charge separation. The cyanobacterial PSI reaction center is composed of one copy each of PsaA,B,C,D,E,F,I,J,K,L,M and X, and forms trimeric complexes. PSI electron transfer chain: 5 divinyl chlorophyll a, 1 divinyl chlorophyll a', 2 phylloquinones and 3 4Fe-4S clusters. PSI core antenna: 90 divinyl chlorophyll a, 22 carotenoids, 3 phospholipids and 1 galactolipid. P700 is a divinyl chlorophyll a/divinyl chlorophyll a' dimer, A0 is one or more divinyl chlorophyll a, A1 is one or both phylloquinones and FX is a shared 4Fe-4S iron-sulfur center. serves as cofactor.

It localises to the cellular thylakoid membrane. The catalysed reaction is reduced [plastocyanin] + hnu + oxidized [2Fe-2S]-[ferredoxin] = oxidized [plastocyanin] + reduced [2Fe-2S]-[ferredoxin]. Its function is as follows. PsaA and PsaB bind P700, the primary electron donor of photosystem I (PSI), as well as the electron acceptors A0, A1 and FX. PSI is a plastocyanin/cytochrome c6-ferredoxin oxidoreductase, converting photonic excitation into a charge separation, which transfers an electron from the donor P700 chlorophyll pair to the spectroscopically characterized acceptors A0, A1, FX, FA and FB in turn. Oxidized P700 is reduced on the lumenal side of the thylakoid membrane by plastocyanin or cytochrome c6. This is Photosystem I P700 chlorophyll a apoprotein A2 from Prochlorococcus marinus (strain MIT 9312).